Reading from the N-terminus, the 279-residue chain is B3 domain-containing protein Os05g0481400 (279 aa).

The segment at 45–68 (ARLQKSTRASPKPRKKFEVGATEV) is disordered. Positions 139–230 (FVKTMVRSHV…RFKIYIIKAV (92 aa)) form a DNA-binding region, TF-B3. Acidic residues-rich tracts occupy residues 233 to 244 (DANESEPADEEA) and 252 to 262 (TEDAAEQDDSP). Residues 233-279 (DANESEPADEEAIGDKDTSTEDAAEQDDSPNAEPLKGTKRRKLRGRR) form a disordered region. A compositionally biased stretch (basic residues) spans 269 to 279 (GTKRRKLRGRR).

The protein resides in the nucleus. This chain is B3 domain-containing protein Os05g0481400, found in Oryza sativa subsp. japonica (Rice).